The primary structure comprises 158 residues: Inorganic pyrophosphatase (158 aa).

Glu-8 contributes to the Mg(2+) binding site. Residues Lys-16, Arg-30, and Tyr-42 each coordinate substrate. Positions 52, 57, 84, and 89 each coordinate Mg(2+). Residue Asp-89 is the Proton acceptor of the active site. Substrate is bound at residue Tyr-125.

Belongs to the PPase family. As to quaternary structure, homohexamer. Requires Mg(2+) as cofactor.

Its subcellular location is the cytoplasm. It catalyses the reaction diphosphate + H2O = 2 phosphate + H(+). In terms of biological role, catalyzes the hydrolysis of inorganic pyrophosphate (PPi) forming two phosphate ions. The protein is Inorganic pyrophosphatase of Corynebacterium efficiens (strain DSM 44549 / YS-314 / AJ 12310 / JCM 11189 / NBRC 100395).